A 479-amino-acid polypeptide reads, in one-letter code: Glycogen synthase (479 aa).

Lysine 16 serves as a coordination point for ADP-alpha-D-glucose.

Belongs to the glycosyltransferase 1 family. Bacterial/plant glycogen synthase subfamily.

It carries out the reaction [(1-&gt;4)-alpha-D-glucosyl](n) + ADP-alpha-D-glucose = [(1-&gt;4)-alpha-D-glucosyl](n+1) + ADP + H(+). It functions in the pathway glycan biosynthesis; glycogen biosynthesis. Its function is as follows. Synthesizes alpha-1,4-glucan chains using ADP-glucose. This is Glycogen synthase from Lactiplantibacillus plantarum (strain ATCC BAA-793 / NCIMB 8826 / WCFS1) (Lactobacillus plantarum).